The primary structure comprises 286 residues: MLKDLFGKRKKYASIPSEKAKMDVPEGLMQKCSNCKKIYYRKEMVKALQVCPNCDYHHPMTAWDRIDSLFDNGTFEEWDKEITSANPLDFPEYESKIAKDREKTSLSEGVVTGKGKVNNVQIAFAVMDSHFRMGSMGSAIGEKITRAIEAAREESIPFVIFTASGGARMQEGVLSLMQMAKTSFAVKRFRDSGGLMISVMTHPTTGGVSASFASIGDYNFAEPGALIGFAGRRIIEQTIREKLPSDFQTAEFQLHHGQVDKVIHRQDMNDTLGKLLKMHMDGRQLK.

The CoA carboxyltransferase N-terminal domain occupies 28–286; it reads LMQKCSNCKK…KMHMDGRQLK (259 aa). Positions 32, 35, 51, and 54 each coordinate Zn(2+). The C4-type zinc finger occupies 32–54; it reads CSNCKKIYYRKEMVKALQVCPNC.

It belongs to the AccD/PCCB family. In terms of assembly, acetyl-CoA carboxylase is a heterohexamer composed of biotin carboxyl carrier protein (AccB), biotin carboxylase (AccC) and two subunits each of ACCase subunit alpha (AccA) and ACCase subunit beta (AccD). It depends on Zn(2+) as a cofactor.

The protein resides in the cytoplasm. The enzyme catalyses N(6)-carboxybiotinyl-L-lysyl-[protein] + acetyl-CoA = N(6)-biotinyl-L-lysyl-[protein] + malonyl-CoA. The protein operates within lipid metabolism; malonyl-CoA biosynthesis; malonyl-CoA from acetyl-CoA: step 1/1. Its function is as follows. Component of the acetyl coenzyme A carboxylase (ACC) complex. Biotin carboxylase (BC) catalyzes the carboxylation of biotin on its carrier protein (BCCP) and then the CO(2) group is transferred by the transcarboxylase to acetyl-CoA to form malonyl-CoA. The protein is Acetyl-coenzyme A carboxylase carboxyl transferase subunit beta of Oceanobacillus iheyensis (strain DSM 14371 / CIP 107618 / JCM 11309 / KCTC 3954 / HTE831).